Reading from the N-terminus, the 405-residue chain is Imidazolonepropionase (405 aa).

Fe(3+) is bound by residues histidine 70 and histidine 72. Residues histidine 70 and histidine 72 each coordinate Zn(2+). 4-imidazolone-5-propanoate contacts are provided by arginine 79, tyrosine 142, and histidine 175. Residue tyrosine 142 participates in N-formimidoyl-L-glutamate binding. Histidine 240 contacts Fe(3+). Histidine 240 is a binding site for Zn(2+). Residue glutamine 243 participates in 4-imidazolone-5-propanoate binding. Aspartate 315 contacts Fe(3+). Aspartate 315 lines the Zn(2+) pocket. 2 residues coordinate N-formimidoyl-L-glutamate: asparagine 317 and glycine 319. Position 320 (threonine 320) interacts with 4-imidazolone-5-propanoate.

Belongs to the metallo-dependent hydrolases superfamily. HutI family. Zn(2+) is required as a cofactor. The cofactor is Fe(3+).

It localises to the cytoplasm. The catalysed reaction is 4-imidazolone-5-propanoate + H2O = N-formimidoyl-L-glutamate. The protein operates within amino-acid degradation; L-histidine degradation into L-glutamate; N-formimidoyl-L-glutamate from L-histidine: step 3/3. Functionally, catalyzes the hydrolytic cleavage of the carbon-nitrogen bond in imidazolone-5-propanoate to yield N-formimidoyl-L-glutamate. It is the third step in the universal histidine degradation pathway. The sequence is that of Imidazolonepropionase from Ectopseudomonas mendocina (strain ymp) (Pseudomonas mendocina).